The sequence spans 84 residues: MNRTRALVCLFLAVLILAHESEAQCRRLCYRNRCVTYCRGRGKRSVEEPSGGAQVVEKRAVDDADIPSAVEERELDEEESIEFR.

The signal sequence occupies residues 1-23 (MNRTRALVCLFLAVLILAHESEA). Glutamine 24 carries the post-translational modification Pyrrolidone carboxylic acid. 2 disulfides stabilise this stretch: cysteine 25–cysteine 38 and cysteine 29–cysteine 34. Position 41 is an arginine amide (arginine 41). A propeptide spanning residues 42–84 (GKRSVEEPSGGAQVVEKRAVDDADIPSAVEERELDEEESIEFR) is cleaved from the precursor.

Expressed by the venom gland.

It localises to the secreted. Antibacterial peptide. In Hadronyche infensa (Fraser island funnel-web spider), this protein is Gomesin-like peptide.